Here is a 302-residue protein sequence, read N- to C-terminus: Homoserine O-acetyltransferase (302 aa).

Catalysis depends on Cys-142, which acts as the Acyl-thioester intermediate. Substrate-binding residues include Lys-163 and Ser-192. The active-site Proton acceptor is the His-235. The active site involves Glu-237. A substrate-binding site is contributed by Arg-249.

Belongs to the MetA family.

The protein resides in the cytoplasm. It catalyses the reaction L-homoserine + acetyl-CoA = O-acetyl-L-homoserine + CoA. It participates in amino-acid biosynthesis; L-methionine biosynthesis via de novo pathway; O-acetyl-L-homoserine from L-homoserine: step 1/1. Transfers an acetyl group from acetyl-CoA to L-homoserine, forming acetyl-L-homoserine. This chain is Homoserine O-acetyltransferase, found in Bacillus pumilus (strain SAFR-032).